A 443-amino-acid polypeptide reads, in one-letter code: Tol-Pal system protein TolB (443 aa).

The signal sequence occupies residues 1–33 (MKIGIINTKIRTVFSAFACMIAASLVCTMPARA).

The protein belongs to the TolB family. As to quaternary structure, the Tol-Pal system is composed of five core proteins: the inner membrane proteins TolA, TolQ and TolR, the periplasmic protein TolB and the outer membrane protein Pal. They form a network linking the inner and outer membranes and the peptidoglycan layer.

Its subcellular location is the periplasm. Part of the Tol-Pal system, which plays a role in outer membrane invagination during cell division and is important for maintaining outer membrane integrity. This chain is Tol-Pal system protein TolB, found in Brucella abortus (strain S19).